The following is a 352-amino-acid chain: Leukotriene B4 receptor 1 (352 aa).

Over 1 to 19 the chain is Extracellular; it reads MNTTSSAAPPSLGVEFISL. An N-linked (GlcNAc...) asparagine glycan is attached at N2. A helical membrane pass occupies residues 20-42; the sequence is LAIILLSVALAVGLPGNSFVVWS. Topologically, residues 43–54 are cytoplasmic; it reads ILKRMQKRSVTA. Residues 55-75 form a helical membrane-spanning segment; that stretch reads LMVLNLALADLAVLLTAPFFL. Topologically, residues 76–91 are extracellular; that stretch reads HFLAQGTWSFGLAGCR. A helical transmembrane segment spans residues 92–113; that stretch reads LCHYVCGVSMYASVLLITAMSL. The Cytoplasmic segment spans residues 114–138; it reads DRSLAVARPFVSQKLRTKAMARRVL. A helical membrane pass occupies residues 139–159; sequence AGIWVLSFLLATPVLAYRTVV. The Extracellular portion of the chain corresponds to 160-178; that stretch reads PWKTNMSLCFPRYPSEGHR. N-linked (GlcNAc...) asparagine glycosylation occurs at N164. The helical transmembrane segment at 179 to 199 threads the bilayer; sequence AFHLIFEAVTGFLLPFLAVVA. The Cytoplasmic segment spans residues 200-221; that stretch reads SYSDIGRRLQARRFRRSRRTGR. A helical membrane pass occupies residues 222–242; sequence LVVLIILTFAAFWLPYHVVNL. At 243–268 the chain is on the extracellular side; sequence AEAGRALAGQAAGLGLVGKRLSLARN. The helical transmembrane segment at 269 to 289 threads the bilayer; that stretch reads VLIALAFLSSSVNPVLYACAG. Residues 290–352 are Cytoplasmic-facing; that stretch reads GGLLRSAGVG…SSPLKLNELN (63 aa). 2 stretches are compositionally biased toward polar residues: residues 310–326 and 338–352; these read SEAS…QTAR and ESLT…NELN. The segment at 310-352 is disordered; the sequence is SEASSTRRGGSLGQTARSGPAALEPGPSESLTASSPLKLNELN.

This sequence belongs to the G-protein coupled receptor 1 family. In terms of processing, phosphorylated by GRK6 upon leukotriene B4 binding; which promotes desensitization. In terms of tissue distribution, expressed at highest levels in heart, skeletal muscle and at lower levels in brain and liver. High level of expression in lymphoid tissues.

It localises to the cell membrane. In terms of biological role, receptor for extracellular ATP &gt; UTP and ADP. The activity of this receptor is mediated by G proteins which activate a phosphatidylinositol-calcium second messenger system. May be the cardiac P2Y receptor involved in the regulation of cardiac muscle contraction through modulation of L-type calcium currents. Is a receptor for leukotriene B4, a potent chemoattractant involved in inflammation and immune response. The chain is Leukotriene B4 receptor 1 (LTB4R) from Homo sapiens (Human).